A 158-amino-acid polypeptide reads, in one-letter code: U4/U6.U5 small nuclear ribonucleoprotein 27 kDa protein (158 aa).

The disordered stretch occupies residues 1 to 102 (MGRSRSRSPE…AEDLEGKTEE (102 aa)). Positions 13–59 (RERRRSRSASRERERRRRERSRSRERRRSRSRSPHRRRSRSPRRHRS) are enriched in basic residues. Residues 66 to 101 (RLKDRRDDDKKEPKESKGGGSKERQLAAEDLEGKTE) are compositionally biased toward basic and acidic residues.

Belongs to the SNUT3 family. Part of a tri-snRNP complex.

It is found in the nucleus. May play a role in mRNA splicing. The sequence is that of U4/U6.U5 small nuclear ribonucleoprotein 27 kDa protein (snrnp27) from Xenopus laevis (African clawed frog).